We begin with the raw amino-acid sequence, 479 residues long: Glutamate--tRNA ligase (479 aa).

The 'HIGH' region motif lies at 9 to 19; sequence PSPTGNLHIGT. The short motif at 243 to 247 is the 'KMSKS' region element; the sequence is KLSKR. Lysine 246 contacts ATP.

Belongs to the class-I aminoacyl-tRNA synthetase family. Glutamate--tRNA ligase type 1 subfamily. Monomer.

It is found in the cytoplasm. It catalyses the reaction tRNA(Glu) + L-glutamate + ATP = L-glutamyl-tRNA(Glu) + AMP + diphosphate. Its function is as follows. Catalyzes the attachment of glutamate to tRNA(Glu) in a two-step reaction: glutamate is first activated by ATP to form Glu-AMP and then transferred to the acceptor end of tRNA(Glu). In Synechococcus sp. (strain JA-2-3B'a(2-13)) (Cyanobacteria bacterium Yellowstone B-Prime), this protein is Glutamate--tRNA ligase.